The sequence spans 862 residues: Aldehyde-alcohol dehydrogenase (862 aa).

The active site involves cysteine 244. 420-425 (GFWGGN) contributes to the NAD(+) binding site.

This sequence in the N-terminal section; belongs to the aldehyde dehydrogenase family. In the C-terminal section; belongs to the iron-containing alcohol dehydrogenase family.

The catalysed reaction is a primary alcohol + NAD(+) = an aldehyde + NADH + H(+). It catalyses the reaction a secondary alcohol + NAD(+) = a ketone + NADH + H(+). The enzyme catalyses an aldehyde + NAD(+) + H2O = a carboxylate + NADH + 2 H(+). Its function is as follows. Has both aldehyde and alcohol dehydrogenase activities. Can use acetaldehyde, butyraldehyde, butanol and ethanol. The sequence is that of Aldehyde-alcohol dehydrogenase from Clostridium acetobutylicum (strain ATCC 824 / DSM 792 / JCM 1419 / IAM 19013 / LMG 5710 / NBRC 13948 / NRRL B-527 / VKM B-1787 / 2291 / W).